Here is a 379-residue protein sequence, read N- to C-terminus: MDPRFINTIPSLRYDDDKCDDEYAFVKALCMSGGDGANSYSANSRLQKKVLSMAKPVLVRNTEEMMMNLDFPTYIKVAELGCSSGQNSFLAIFEIINTINVLCQHVNKNSPEIDCCLNDLPENDFNTTFKFVPFFNKELMITNKSSCFVYGAPGSFYSRLFSRNSLHLIHSSYALHWLSKVPEKLENNKGNLYITSSSPQSAYKAYLNQFQKDFTMFLRLRSEEIVSNGRMVLTFIGRNTLNDPLYRDCCHFWTLLSNSLRDLVFEGLVSESKLDAFNMPFYDPNVQELKEVIQKEGSFEINELESHGFDLGHYYEEDDFEAGRNEANGIRAVSEPMLIAHFGEEIIDTLFDKYAYHVTQHANCRNKTTVSLVVSLTKK.

S-adenosyl-L-homocysteine is bound at residue tyrosine 40. Residue glutamine 47 coordinates salicylate. Cysteine 82, asparagine 87, aspartate 119, leucine 120, serine 155, and phenylalanine 156 together coordinate S-adenosyl-L-homocysteine. Positions 176 and 177 each coordinate salicylate. Mg(2+)-binding residues include asparagine 188, aspartate 275, phenylalanine 277, and asparagine 278.

The protein belongs to the methyltransferase superfamily. Type-7 methyltransferase family. SABATH subfamily. Homodimer. Requires Mg(2+) as cofactor. In terms of tissue distribution, expressed in flowers and at lower levels in leaves and stems. Hardly detected in roots and siliques. Expressed in the sepals and the leaf trichomes and hydathodes.

The enzyme catalyses benzoate + S-adenosyl-L-methionine = methyl benzoate + S-adenosyl-L-homocysteine. It carries out the reaction salicylate + S-adenosyl-L-methionine = methyl salicylate + S-adenosyl-L-homocysteine. Its function is as follows. Methyltransferase involved in the biosynthesis of methylsalicylate in response to stresses. Utilizes salicylic acid (SA) more efficiently than benzoic acid (BA). Can also use anthranilic acid and m-hydroxybenzoic acid as substrate. The sequence is that of Salicylate/benzoate carboxyl methyltransferase (BSMT1) from Arabidopsis thaliana (Mouse-ear cress).